Consider the following 443-residue polypeptide: COP9 signalosome complex subunit 2 (443 aa).

The segment at 1-275 (MSDMEDDFMC…DESGSPRRTT (275 aa)) is mediates interaction with NIF3L1. Residues 254–416 (AHTDFFEAFK…QLLELDHQKR (163 aa)) enclose the PCI domain.

The protein belongs to the CSN2 family. As to quaternary structure, component of the CSN complex, composed of COPS1/GPS1, COPS2, COPS3, COPS4, COPS5, COPS6, COPS7 (COPS7A or COPS7B), COPS8 and COPS9 isoform 1. In the complex, it probably interacts directly with COPS1, COPS4, COPS5, COPS6 and COPS7 (COPS7A or COPS7B). Specifically interacts with the ligand binding domain of the thyroid receptor (TR). Does not require the presence of thyroid hormone for its interaction. Interacts with CUL1 and CUL2. Interacts with IRF8/ICSBP1 and with nuclear receptors NR2F1 and NR0B1. Interacts with NIF3L1. Post-translationally, phosphorylated by CK2 and PKD kinases.

The protein localises to the cytoplasm. Its subcellular location is the nucleus. Essential component of the COP9 signalosome complex (CSN), a complex involved in various cellular and developmental processes. The CSN complex is an essential regulator of the ubiquitin (Ubl) conjugation pathway by mediating the deneddylation of the cullin subunits of SCF-type E3 ligase complexes, leading to decrease the Ubl ligase activity of SCF-type complexes such as SCF, CSA or DDB2. The complex is also involved in phosphorylation of p53/TP53, c-jun/JUN, IkappaBalpha/NFKBIA, ITPK1 and IRF8/ICSBP, possibly via its association with CK2 and PKD kinases. CSN-dependent phosphorylation of TP53 and JUN promotes and protects degradation by the Ubl system, respectively. Involved in early stage of neuronal differentiation via its interaction with NIF3L1. In Homo sapiens (Human), this protein is COP9 signalosome complex subunit 2 (COPS2).